A 426-amino-acid chain; its full sequence is Adenylosuccinate synthetase (426 aa).

GTP is bound by residues 12 to 18 and 40 to 42; these read GDEGKGK and GHT. D13 acts as the Proton acceptor in catalysis. Positions 13 and 40 each coordinate Mg(2+). Residues 13 to 16, 38 to 41, T131, R145, Q226, T241, and R305 contribute to the IMP site; these read DEGK and NAGH. The active-site Proton donor is H41. Residue 301–307 participates in substrate binding; the sequence is ATTGRKR. GTP-binding positions include R307, 333-335, and 415-417; these read KLD and SVG.

The protein belongs to the adenylosuccinate synthetase family. In terms of assembly, homodimer. Mg(2+) is required as a cofactor.

It is found in the cytoplasm. The catalysed reaction is IMP + L-aspartate + GTP = N(6)-(1,2-dicarboxyethyl)-AMP + GDP + phosphate + 2 H(+). It participates in purine metabolism; AMP biosynthesis via de novo pathway; AMP from IMP: step 1/2. Its function is as follows. Plays an important role in the de novo pathway of purine nucleotide biosynthesis. Catalyzes the first committed step in the biosynthesis of AMP from IMP. In Nitratidesulfovibrio vulgaris (strain ATCC 29579 / DSM 644 / CCUG 34227 / NCIMB 8303 / VKM B-1760 / Hildenborough) (Desulfovibrio vulgaris), this protein is Adenylosuccinate synthetase.